The primary structure comprises 196 residues: Molybdenum cofactor guanylyltransferase (196 aa).

GTP is bound by residues 10 to 12 (LAG), K23, N51, D69, and D99. Position 99 (D99) interacts with Mg(2+).

This sequence belongs to the MobA family. Monomer. The cofactor is Mg(2+).

It is found in the cytoplasm. The catalysed reaction is Mo-molybdopterin + GTP + H(+) = Mo-molybdopterin guanine dinucleotide + diphosphate. Its function is as follows. Transfers a GMP moiety from GTP to Mo-molybdopterin (Mo-MPT) cofactor (Moco or molybdenum cofactor) to form Mo-molybdopterin guanine dinucleotide (Mo-MGD) cofactor. This chain is Molybdenum cofactor guanylyltransferase, found in Shewanella sp. (strain W3-18-1).